A 210-amino-acid polypeptide reads, in one-letter code: PRCYRYCKNKPYPKSRFCRGVPDPKIRIFDLGRKKAKVDEFPLCGHMVSDEYEQLSSEALEAARICANKYMVKSCGKDGFHIRVRLHPFHVIRINKMLSCAGADRLQTGMRGAFGKPQGTVARVHMGQVIMSIRTKAQNKEHVVEALRRAKFKFPGRQKIHISKKWGFTKFNADAFEEMVAQKRLIPDGCGVKYVPGRGPLDRWRALHAA.

This sequence belongs to the universal ribosomal protein uL16 family. Component of the large ribosomal subunit. Mature ribosomes consist of a small (40S) and a large (60S) subunit. The 40S subunit contains about 33 different proteins and 1 molecule of RNA (18S). The 60S subunit contains about 49 different proteins and 3 molecules of RNA (28S, 5.8S and 5S).

It is found in the cytoplasm. Its function is as follows. Component of the large ribosomal subunit. Plays a role in the formation of actively translating ribosomes. (Microbial infection) Seems to bind to the leucine zipper of viral and cellular JUN. This Gallus gallus (Chicken) protein is Large ribosomal subunit protein uL16.